The chain runs to 1409 residues: MLFNKCIIISINLDFSNKEKCMTKPYSIGLDIGTNSVGWAVITDNYKVPSKKMKVLGNTSKKYIKKNLLGVLLFDSGITAEGRRLKRTARRRYTRRRNRILYLQEIFSTEMATLDDAFFQRLDDSFLVPDDKRDSKYPIFGNLVEEKVYHDEFPTIYHLRKYLADSTKKADLRLVYLALAHMIKYRGHFLIEGEFNSKNNDIQKNFQDFLDTYNAIFESDLSLENSKQLEEIVKDKISKLEKKDRILKLFPGEKNSGIFSEFLKLIVGNQADFRKCFNLDEKASLHFSKESYDEDLETLLGYIGDDYSDVFLKAKKLYDAILLSGFLTVTDNETEAPLSSAMIKRYNEHKEDLALLKEYIRNISLKTYNEVFKDDTKNGYAGYIDGKTNQEDFYVYLKNLLAEFEGADYFLEKIDREDFLRKQRTFDNGSIPYQIHLQEMRAILDKQAKFYPFLAKNKERIEKILTFRIPYYVGPLARGNSDFAWSIRKRNEKITPWNFEDVIDKESSAEAFINRMTSFDLYLPEEKVLPKHSLLYETFNVYNELTKVRFIAESMRDYQFLDSKQKKDIVRLYFKDKRKVTDKDIIEYLHAIYGYDGIELKGIEKQFNSSLSTYHDLLNIINDKEFLDDSSNEAIIEEIIHTLTIFEDREMIKQRLSKFENIFDKSVLKKLSRRHYTGWGKLSAKLINGIRDEKSGNTILDYLIDDGISNRNFMQLIHDDALSFKKKIQKAQIIGDEDKGNIKEVVKSLPGSPAIKKGILQSIKIVDELVKVMGGRKPESIVVEMARENQYTNQGKSNSQQRLKRLEKSLKELGSKILKENIPAKLSKIDNNALQNDRLYLYYLQNGKDMYTGDDLDIDRLSNYDIDHIIPQAFLKDNSIDNKVLVSSASNRGKSDDFPSLEVVKKRKTFWYQLLKSKLISQRKFDNLTKAERGGLLPEDKAGFIQRQLVETRQITKHVARLLDEKFNNKKDENNRAVRTVKIITLKSTLVSQFRKDFELYKVREINDFHHAHDAYLNAVIASALLKKYPKLEPEFVYGDYPKYNSFRERKSATEKVYFYSNIMNIFKKSISLADGRVIERPLIEVNEETGESVWNKESDLATVRRVLSYPQVNVVKKVEEQNHGLDRGKPKGLFNANLSSKPKPNSNENLVGAKEYLDPKKYGGYAGISNSFAVLVKGTIEKGAKKKITNVLEFQGISILDRINYRKDKLNFLLEKGYKDIELIIELPKYSLFELSDGSRRMLASILSTNNKRGEIHKGNQIFLSQKFVKLLYHAKRISNTINENHRKYVENHKKEFEELFYYILEFNENYVGAKKNGKLLNSAFQSWQNHSIDELCSSFIGPTGSERKGLFELTSRGSAADFEFLGVKIPRYRDYTPSSLLKDATLIHQSVTGLYETRIDLAKLGEG.

Residue aspartate 31 is the For RuvC-like nuclease domain of the active site. 3 residues coordinate Mg(2+): aspartate 31, glutamate 784, and glutamate 788. Positions 792-949 (TNQGKSNSQQ…DKAGFIQRQL (158 aa)) constitute an HNH Cas9-type domain. The active-site Proton acceptor for HNH nuclease domain is histidine 868. Position 1011 (histidine 1011) interacts with Mg(2+). Over residues 1121-1130 (EQNHGLDRGK) the composition is skewed to basic and acidic residues. A disordered region spans residues 1121-1151 (EQNHGLDRGKPKGLFNANLSSKPKPNSNENL). Over residues 1137-1150 (ANLSSKPKPNSNEN) the composition is skewed to polar residues.

It belongs to the CRISPR-associated protein Cas9 family. Subtype II-A subfamily. Monomer. Binds crRNA and tracrRNA. It depends on Mg(2+) as a cofactor.

Its activity is regulated as follows. Only has nuclease activity when bound to both gRNAs (crRNA plus tracrRNA). In terms of biological role, CRISPR (clustered regularly interspaced short palindromic repeat) is an adaptive immune system that provides protection against mobile genetic elements (viruses, transposable elements and conjugative plasmids). CRISPR clusters contain spacers, sequences complementary to antecedent mobile elements, and target invading nucleic acids. CRISPR clusters are transcribed and processed into CRISPR RNA (crRNA). In type II CRISPR systems correct processing of pre-crRNA requires a trans-encoded small RNA (tracrRNA), endogenous ribonuclease 3 (rnc) and Cas9. The tracrRNA serves as a guide for ribonuclease 3-aided processing of pre-crRNA. Cas9/crRNA/tracrRNA endonucleolytically cleaves linear or circular dsDNA target complementary to the spacer yielding blunt ends; Cas9 is inactive in the absence of the 2 guide RNAs (gRNA). Cas9 recognizes a 3'-G-rich protospacer adjacent motif (PAM, TGGTG in this organism) in the CRISPR repeat sequences to help distinguish self versus nonself, as targets within the bacterial CRISPR locus do not have PAMs. PAM recognition is also required for catalytic activity. When the CRISPR3/cas system consisting of cas9-cas1-cas2-csn2-CRISPR3 or just cas9-CRISPR3 is expressed in E.coli it prevents plasmids homologous to spacers 1 or 2 from transforming. The protein is CRISPR-associated endonuclease Cas9 of Streptococcus thermophilus.